The sequence spans 314 residues: Olfactory receptor 5P76 (314 aa).

Over 1–28 (MAFLEDGNHTAVTGFILLGLTDDPVLRV) the chain is Extracellular. An N-linked (GlcNAc...) asparagine glycan is attached at Asn8. Residues 29–49 (VLFVIILCIYLVTVSGNLSTI) form a helical membrane-spanning segment. The Cytoplasmic portion of the chain corresponds to 50–57 (LLIRVSSQ). Residues 58-78 (LHHPMYFFLSHLASADIGYSS) traverse the membrane as a helical segment. Topologically, residues 79-102 (SVTPNMLVNFLVERNTISYLGCGI) are extracellular. Cys100 and Cys192 form a disulfide bridge. The chain crosses the membrane as a helical span at residues 103 to 123 (QLGSAVFFGTVECFLLAAMAY). The Cytoplasmic segment spans residues 124-136 (DRFIAICSPLLYS). Residues 137–157 (NKMSTQVCVQLLVGSYIGGFL) form a helical membrane-spanning segment. The Extracellular portion of the chain corresponds to 158–199 (NASSFTLSFFSLVFCGPNRVNHFFCDFAPLVKLSCSDVSVPA). Residues 200 to 220 (VVPSFTAGSIIIVTIFVIAVS) form a helical membrane-spanning segment. The Cytoplasmic portion of the chain corresponds to 221–240 (YIYILITILKMRSTEGRQKA). Residues 241 to 261 (FSTCTSHLTAVTLFYGTITFI) form a helical membrane-spanning segment. Over 262 to 274 (YVMPKSSYSTDQN) the chain is Extracellular. The helical transmembrane segment at 275 to 295 (KVVSVFYMVVVPMLNPLIYSL) threads the bilayer. The Cytoplasmic segment spans residues 296–314 (RNKEIKGALKRQLAKNTFS).

Belongs to the G-protein coupled receptor 1 family.

The protein resides in the cell membrane. Its function is as follows. Potential odorant receptor. The protein is Olfactory receptor 5P76 of Mus musculus (Mouse).